The following is an 88-amino-acid chain: MEVETDKKKLIESFRLHEKDTGSAVVQVALLTQKIKRLTAHLQNNRKDHSSRRGLLRMVNRRRKLLEYLNRTEPEKYREMLSRLSLRK.

It belongs to the universal ribosomal protein uS15 family. As to quaternary structure, part of the 30S ribosomal subunit. Forms a bridge to the 50S subunit in the 70S ribosome, contacting the 23S rRNA.

In terms of biological role, one of the primary rRNA binding proteins, it binds directly to 16S rRNA where it helps nucleate assembly of the platform of the 30S subunit by binding and bridging several RNA helices of the 16S rRNA. Forms an intersubunit bridge (bridge B4) with the 23S rRNA of the 50S subunit in the ribosome. The polypeptide is Small ribosomal subunit protein uS15 (Methylacidiphilum infernorum (isolate V4) (Methylokorus infernorum (strain V4))).